Consider the following 158-residue polypeptide: SsrA-binding protein (158 aa).

This sequence belongs to the SmpB family.

It is found in the cytoplasm. Its function is as follows. Required for rescue of stalled ribosomes mediated by trans-translation. Binds to transfer-messenger RNA (tmRNA), required for stable association of tmRNA with ribosomes. tmRNA and SmpB together mimic tRNA shape, replacing the anticodon stem-loop with SmpB. tmRNA is encoded by the ssrA gene; the 2 termini fold to resemble tRNA(Ala) and it encodes a 'tag peptide', a short internal open reading frame. During trans-translation Ala-aminoacylated tmRNA acts like a tRNA, entering the A-site of stalled ribosomes, displacing the stalled mRNA. The ribosome then switches to translate the ORF on the tmRNA; the nascent peptide is terminated with the 'tag peptide' encoded by the tmRNA and targeted for degradation. The ribosome is freed to recommence translation, which seems to be the essential function of trans-translation. The polypeptide is SsrA-binding protein (Bifidobacterium longum (strain DJO10A)).